The following is a 158-amino-acid chain: Naphthalene 1,2-dioxygenase system, small oxygenase component (158 aa).

This sequence belongs to the bacterial ring-hydroxylating dioxygenase beta subunit family. As to quaternary structure, the naphthalene dioxygenase (NDO) multicomponent enzyme system is composed of an electron transfer component and a dioxygenase component (iron sulfur protein (ISP)). The electron transfer component is composed of a ferredoxin reductase (NdoR) and a ferredoxin (NdoA), and the dioxygenase component is formed of a heterohexamer (trimer of heterodimers) of three large alpha subunits (NdoB) and three small beta subunits (NdoC).

It participates in aromatic compound metabolism; naphthalene degradation. Component of the naphthalene dioxygenase (NDO) multicomponent enzyme system which catalyzes the incorporation of both atoms of molecular oxygen into naphthalene to form cis-(1R,2S)-dihydroxy-1,2-dihydronaphthalene. The beta subunit seems to have a structural role in the holoenzyme. The chain is Naphthalene 1,2-dioxygenase system, small oxygenase component from Pseudomonas fluorescens.